The sequence spans 158 residues: Salt stress-responsive protein YocM (158 aa).

Positions 51-158 (GKGDASFPSM…GQAKTIVIDD (108 aa)) constitute a sHSP domain.

This sequence belongs to the small heat shock protein (HSP20) family. In terms of assembly, forms homodimers, homotetramers and higher oligomers.

The protein localises to the cytoplasm. Its function is as follows. Part of the cellular protein quality control system with a specific role in salt stress response. May facilitate protein homeostasis, together with chemical chaperones that accumulate during the salt stress response. Increased levels of YocM protects against both heat and salt stress. In vitro, displays an unusual aggregase chaperone activity. The polypeptide is Salt stress-responsive protein YocM (yocM) (Bacillus subtilis (strain 168)).